We begin with the raw amino-acid sequence, 45 residues long: Sperm-specific protein Phi-3 (45 aa).

A disordered region spans residues 1–45; sequence AKAKRSPRKKKAAVKKSSKSKAKKPKSPKKKKAAKKPAKKAAKKK.

The protein resides in the nucleus. Its subcellular location is the chromosome. Functionally, involved in nuclear basic protein transition: histones are replaced by spermatid specific proteins which are themselves replaced by protamines in late spermatids. The sequence is that of Sperm-specific protein Phi-3 from Mytilus californianus (California mussel).